The primary structure comprises 409 residues: Protein a6 (409 aa).

Position 86 is a phosphoserine (Ser86). The segment covering 106-120 (RAHRTGRRQAPRRAA) has biased composition (basic residues). The tract at residues 106–165 (RAHRTGRRQAPRRAATHSYPVTDSILITSDDEHNEQEPSSTARVRSQLSMRSPPPLAPLT) is disordered. Thr133 bears the Phosphothreonine mark. Ser134 is subject to Phosphoserine. A compositionally biased stretch (polar residues) spans 142-155 (EPSSTARVRSQLSM).

The polypeptide is Protein a6 (a6) (Drosophila melanogaster (Fruit fly)).